The primary structure comprises 470 residues: 3-isopropylmalate dehydratase large subunit (470 aa).

Residues 50–121 form a disordered region; sequence NVARGCQHRH…PCGRPGAGRH (72 aa). [4Fe-4S] cluster contacts are provided by C349, C409, and C412.

This sequence belongs to the aconitase/IPM isomerase family. LeuC type 1 subfamily. As to quaternary structure, heterodimer of LeuC and LeuD. Requires [4Fe-4S] cluster as cofactor.

It catalyses the reaction (2R,3S)-3-isopropylmalate = (2S)-2-isopropylmalate. Its pathway is amino-acid biosynthesis; L-leucine biosynthesis; L-leucine from 3-methyl-2-oxobutanoate: step 2/4. In terms of biological role, catalyzes the isomerization between 2-isopropylmalate and 3-isopropylmalate, via the formation of 2-isopropylmaleate. In Azotobacter vinelandii, this protein is 3-isopropylmalate dehydratase large subunit.